The sequence spans 387 residues: Putative purine permease 15 (387 aa).

A run of 10 helical transmembrane segments spans residues 44 to 64 (WVTI…ARLL), 84 to 104 (TLLQ…HFLI), 122 to 142 (LAIT…FSDV), 150 to 169 (VFTL…SKYY), 179 to 199 (FISL…FSAG), 210 to 230 (YGII…LCII), 252 to 272 (FVVV…ILVA), 306 to 326 (VAWQ…SAVF), 329 to 349 (VISV…YNTH), and 354 to 374 (VFRG…IYII).

It belongs to the purine permeases (TC 2.A.7.14) family.

Its subcellular location is the membrane. In Arabidopsis thaliana (Mouse-ear cress), this protein is Putative purine permease 15 (PUP15).